A 397-amino-acid chain; its full sequence is Neuroplastin (397 aa).

A signal peptide spans 1–28 (MSGSSLPGALALSLLLVSGSLLPGPGAA). 3 consecutive Ig-like domains span residues 29–134 (QNAG…PSIT), 148–234 (PRIV…IEVK), and 237–327 (PDIT…ASVS). The Extracellular portion of the chain corresponds to 29–338 (QNAGFVKSPM…VLRVRSHLAP (310 aa)). A disulfide bridge connects residues C52 and C116. The tract at residues 149–161 (RIVTSEEVIIRES) is narpin; mediates binding with FGFR1 and has antidepressant-like activity. An intrachain disulfide couples C169 to C217. 6 N-linked (GlcNAc...) asparagine glycosylation sites follow: N170, N196, N228, N283, N295, and N316. Residues C258 and C315 are joined by a disulfide bond. The helical transmembrane segment at 339 to 359 (LWPFLGILAEIIILVVIIVVY) threads the bilayer. The Cytoplasmic segment spans residues 360 to 397 (EKRKRPDEVPDDDEPAGPMKTNSTNNHKDKNLRQRNTN). The segment at 364-397 (RPDEVPDDDEPAGPMKTNSTNNHKDKNLRQRNTN) is disordered.

Interacts with ATP2B1; this interaction stabilizes ATP2B1 and increases ATPase activity; this interaction controls T cell calcium homeostasis following T cell activation. Interacts with XKR8; promoting its localization at the cell membrane. In terms of processing, N-glycosylated. Isoform 1 and isoform 2 are widely expressed with variable levels in brain. Isoform 1 is expressed in cerebellum and midbrain. Isoform 1 and isoform 2 are expressed in cerebral cortex, hippocampus and striatum. Isoform 2 is more abundant in the cerebral cortex than isoform 1.

It localises to the cell membrane. It is found in the postsynaptic density. Its function is as follows. Probable homophilic and heterophilic cell adhesion molecule involved in long term potentiation at hippocampal excitatory synapses through activation of p38MAPK. May also regulate neurite outgrowth by activating the FGFR1 signaling pathway. May play a role in synaptic plasticity. Also acts as a chaperone for ATP2B1; stabilizes ATP2B1 and increases its ATPase activity. Promotes localization of XKR8 at the cell membrane. The chain is Neuroplastin (Nptn) from Mus musculus (Mouse).